A 38-amino-acid polypeptide reads, in one-letter code: Large ribosomal subunit protein bL36 (38 aa).

Belongs to the bacterial ribosomal protein bL36 family.

This chain is Large ribosomal subunit protein bL36, found in Buchnera aphidicola subsp. Cinara cedri (strain Cc).